The sequence spans 147 residues: Hemoglobin larval subunit beta-1 (147 aa).

Residues 3 to 147 (HLSADEKSAI…LVAALSHGYF (145 aa)) enclose the Globin domain. The heme b site is built by H64 and H93.

This sequence belongs to the globin family. In terms of assembly, heterotetramer of two alpha chains and two beta chains. As to expression, red blood cells.

Its function is as follows. This is a larval (tadpole) beta-globin. The chain is Hemoglobin larval subunit beta-1 from Xenopus laevis (African clawed frog).